The primary structure comprises 198 residues: Nucleoid occlusion factor SlmA (198 aa).

The HTH tetR-type domain maps to 10–70 (NRREEILQSL…SLIEFIEDSL (61 aa)). The H-T-H motif DNA-binding region spans 33–52 (TTAKLAASVGVSEAALYRHF). Positions 117–145 (EQDRLQGRINQLFERIEAQLRQVMREKKM) form a coiled coil.

This sequence belongs to the nucleoid occlusion factor SlmA family. In terms of assembly, homodimer. Interacts with FtsZ.

It is found in the cytoplasm. The protein resides in the nucleoid. Required for nucleoid occlusion (NO) phenomenon, which prevents Z-ring formation and cell division over the nucleoid. Acts as a DNA-associated cell division inhibitor that binds simultaneously chromosomal DNA and FtsZ, and disrupts the assembly of FtsZ polymers. SlmA-DNA-binding sequences (SBS) are dispersed on non-Ter regions of the chromosome, preventing FtsZ polymerization at these regions. This Klebsiella pneumoniae subsp. pneumoniae (strain ATCC 700721 / MGH 78578) protein is Nucleoid occlusion factor SlmA.